Here is a 780-residue protein sequence, read N- to C-terminus: Subtilisin-like protease SBT5.1 (780 aa).

A signal peptide spans 1-25 (MMRCLTITIMFFMFFFLSVIQKCKS). The propeptide at 26-106 (ETSKSGDYII…VFPDQMLQLH (81 aa)) is activation peptide. Positions 33–106 (YIIYMGAASS…VFPDQMLQLH (74 aa)) constitute an Inhibitor I9 domain. The region spanning 110 to 617 (SWDFLVQESY…AGQVTIFGPS (508 aa)) is the Peptidase S8 domain. Residue Asp-147 is the Charge relay system of the active site. Asn-197 is a glycosylation site (N-linked (GlcNAc...) asparagine). Residue His-215 is the Charge relay system of the active site. A glycan (N-linked (GlcNAc...) asparagine) is linked at Asn-230. One can recognise a PA domain in the interval 385–469 (IDANEEAARN…PEDGIQIMSY (85 aa)). N-linked (GlcNAc...) asparagine glycosylation is present at Asn-471. Catalysis depends on Ser-550, which acts as the Charge relay system. Asn-776 carries an N-linked (GlcNAc...) asparagine glycan.

It belongs to the peptidase S8 family.

Its subcellular location is the secreted. This chain is Subtilisin-like protease SBT5.1, found in Arabidopsis thaliana (Mouse-ear cress).